Consider the following 562-residue polypeptide: Arginine--tRNA ligase (562 aa).

Positions 129–139 match the 'HIGH' region motif; it reads ANPTGPLHVGH.

It belongs to the class-I aminoacyl-tRNA synthetase family. In terms of assembly, monomer.

The protein localises to the cytoplasm. It catalyses the reaction tRNA(Arg) + L-arginine + ATP = L-arginyl-tRNA(Arg) + AMP + diphosphate. The sequence is that of Arginine--tRNA ligase from Xylella fastidiosa (strain M12).